We begin with the raw amino-acid sequence, 183 residues long: RNA pyrophosphohydrolase (183 aa).

In terms of domain architecture, Nudix hydrolase spans glycine 6–glutamate 149. A Nudix box motif is present at residues glycine 38–glycine 59.

It belongs to the Nudix hydrolase family. RppH subfamily. The cofactor is a divalent metal cation.

Its function is as follows. Accelerates the degradation of transcripts by removing pyrophosphate from the 5'-end of triphosphorylated RNA, leading to a more labile monophosphorylated state that can stimulate subsequent ribonuclease cleavage. The chain is RNA pyrophosphohydrolase from Thiobacillus denitrificans (strain ATCC 25259 / T1).